A 728-amino-acid polypeptide reads, in one-letter code: Putative auxin response factor 20 (728 aa).

A DNA-binding region (TF-B3 1) is located at residues 119–233; that stretch reads FFEKQLSPAD…ELLVGVRRAP (115 aa). 2 stretches are compositionally biased toward low complexity: residues 665-689 and 700-712; these read PQGS…TTSA and ASSS…IIPS. A disordered region spans residues 665 to 728; sequence PQGSDEEAAA…IVNPRDGSQG (64 aa).

The protein belongs to the ARF family. In terms of assembly, homo and heterodimers.

Its subcellular location is the nucleus. In terms of biological role, auxin response factors (ARFs) are transcriptional factors that bind specifically to the DNA sequence 5'-TGTCTC-3' found in the auxin-responsive promoter elements (AuxREs). This Oryza sativa subsp. japonica (Rice) protein is Putative auxin response factor 20 (ARF20).